The sequence spans 22 residues: thr operon leader peptide (22 aa).

The segment at 1-22 (MRNISLTTTIITTTDTTGNGAG) is disordered. Residues 7–22 (TTTIITTTDTTGNGAG) are compositionally biased toward low complexity.

This sequence belongs to the thr operon leader peptide family.

This protein is involved in control of the biosynthesis of threonine. The polypeptide is thr operon leader peptide (Serratia marcescens).